The chain runs to 448 residues: Glutamyl-tRNA reductase (448 aa).

Substrate-binding positions include 48 to 51, S100, 105 to 107, and Q111; these read TCNR and EDQ. C49 acts as the Nucleophile in catalysis. 180–185 contributes to the NADP(+) binding site; it reads GAGEIG.

This sequence belongs to the glutamyl-tRNA reductase family. As to quaternary structure, homodimer.

It catalyses the reaction (S)-4-amino-5-oxopentanoate + tRNA(Glu) + NADP(+) = L-glutamyl-tRNA(Glu) + NADPH + H(+). It participates in porphyrin-containing compound metabolism; protoporphyrin-IX biosynthesis; 5-aminolevulinate from L-glutamyl-tRNA(Glu): step 1/2. Its function is as follows. Catalyzes the NADPH-dependent reduction of glutamyl-tRNA(Glu) to glutamate 1-semialdehyde (GSA). In Methanosarcina mazei (strain ATCC BAA-159 / DSM 3647 / Goe1 / Go1 / JCM 11833 / OCM 88) (Methanosarcina frisia), this protein is Glutamyl-tRNA reductase.